A 220-amino-acid polypeptide reads, in one-letter code: Peptide methionine sulfoxide reductase MsrA (220 aa).

Residue Cys-52 is part of the active site.

Belongs to the MsrA Met sulfoxide reductase family.

It catalyses the reaction L-methionyl-[protein] + [thioredoxin]-disulfide + H2O = L-methionyl-(S)-S-oxide-[protein] + [thioredoxin]-dithiol. It carries out the reaction [thioredoxin]-disulfide + L-methionine + H2O = L-methionine (S)-S-oxide + [thioredoxin]-dithiol. Its function is as follows. Has an important function as a repair enzyme for proteins that have been inactivated by oxidation. Catalyzes the reversible oxidation-reduction of methionine sulfoxide in proteins to methionine. The sequence is that of Peptide methionine sulfoxide reductase MsrA from Corynebacterium diphtheriae (strain ATCC 700971 / NCTC 13129 / Biotype gravis).